The chain runs to 356 residues: Peptide chain release factor 1 (356 aa).

At Gln233 the chain carries N5-methylglutamine.

Belongs to the prokaryotic/mitochondrial release factor family. Methylated by PrmC. Methylation increases the termination efficiency of RF1.

It is found in the cytoplasm. Peptide chain release factor 1 directs the termination of translation in response to the peptide chain termination codons UAG and UAA. This Symbiobacterium thermophilum (strain DSM 24528 / JCM 14929 / IAM 14863 / T) protein is Peptide chain release factor 1.